A 575-amino-acid polypeptide reads, in one-letter code: 2-isopropylmalate synthase (575 aa).

A Pyruvate carboxyltransferase domain is found at 31-305 (PTWLSTDLRD…APGLDFSDIA (275 aa)). Mg(2+)-binding residues include Asp-40, His-244, His-246, and Asn-280. Residues 437 to 575 (PVQASPDFSD…RFAGEEQGKG (139 aa)) form a regulatory domain region.

The protein belongs to the alpha-IPM synthase/homocitrate synthase family. LeuA type 2 subfamily. Homodimer. Mg(2+) serves as cofactor.

Its subcellular location is the cytoplasm. The catalysed reaction is 3-methyl-2-oxobutanoate + acetyl-CoA + H2O = (2S)-2-isopropylmalate + CoA + H(+). Its pathway is amino-acid biosynthesis; L-leucine biosynthesis; L-leucine from 3-methyl-2-oxobutanoate: step 1/4. Its function is as follows. Catalyzes the condensation of the acetyl group of acetyl-CoA with 3-methyl-2-oxobutanoate (2-ketoisovalerate) to form 3-carboxy-3-hydroxy-4-methylpentanoate (2-isopropylmalate). In Herbaspirillum seropedicae (strain SmR1), this protein is 2-isopropylmalate synthase.